Consider the following 245-residue polypeptide: Cysteine-rich secretory protein 3 (245 aa).

Positions 1-22 (MALLPVLLFLAAVLLPFFPASG) are cleaved as a signal peptide. The region spanning 42–171 (VNKHNDLRRT…TLKYYYVCQY (130 aa)) is the SCP domain. 5 cysteine pairs are disulfide-bonded: cysteine 191/cysteine 198, cysteine 194/cysteine 203, cysteine 207/cysteine 240, cysteine 216/cysteine 234, and cysteine 225/cysteine 238. One can recognise a ShKT domain in the interval 207–240 (CEYEDLVSNCDSLKKIAGCEHELLKENCKTTCQC).

Belongs to the CRISP family. Interacts with A1BG. As to expression, expressed in the salivary gland, in the ampulla and the seminal vesicle.

The protein resides in the secreted. In Equus caballus (Horse), this protein is Cysteine-rich secretory protein 3 (CRISP3).